The primary structure comprises 135 residues: Small ribosomal subunit protein uS11 (135 aa).

It belongs to the universal ribosomal protein uS11 family. Part of the 30S ribosomal subunit. Interacts with proteins S7 and S18. Binds to IF-3.

Functionally, located on the platform of the 30S subunit, it bridges several disparate RNA helices of the 16S rRNA. Forms part of the Shine-Dalgarno cleft in the 70S ribosome. The polypeptide is Small ribosomal subunit protein uS11 (Cutibacterium acnes (strain DSM 16379 / KPA171202) (Propionibacterium acnes)).